A 506-amino-acid polypeptide reads, in one-letter code: Alpha-ketoglutarate-dependent dioxygenase FTO (506 aa).

Thr4 is subject to Phosphothreonine. The segment at 32–326 (TPKDDEFYQQ…SSTHRVAECS (295 aa)) is fe2OG dioxygenase domain. Substrate contacts are provided by Arg96 and Tyr108. 2-oxoglutarate is bound at residue Asn204. The tract at residues 212–223 (PYLKEEPYFGMG) is loop L1; predicted to block binding of double-stranded DNA or RNA. Lys215 carries the N6-acetyllysine modification. Fe cation-binding residues include His230 and Asp232. 230–233 (HHDE) contacts substrate. Tyr294 serves as a coordination point for 2-oxoglutarate. His306 lines the Fe cation pocket. Residues 315–317 (RFS), Thr319, and Arg321 each bind 2-oxoglutarate.

It belongs to the fto family. As to quaternary structure, monomer. May also exist as homodimer. Fe(2+) is required as a cofactor.

The protein resides in the nucleus. The protein localises to the nucleus speckle. It is found in the cytoplasm. It carries out the reaction a 5'-end (N(7)-methyl 5'-triphosphoguanosine)-(N(6),2'-O-dimethyladenosine) in mRNA + 2-oxoglutarate + O2 = a 5'-end (N(7)-methyl 5'-triphosphoguanosine)-(2'-O-methyladenosine) in mRNA + formaldehyde + succinate + CO2. The catalysed reaction is an N(6)-methyladenosine in mRNA + 2-oxoglutarate + O2 = an adenosine in mRNA + formaldehyde + succinate + CO2. It catalyses the reaction N(6)-methyladenosine in U6 snRNA + 2-oxoglutarate + O2 = adenosine in U6 snRNA + formaldehyde + succinate + CO2. The enzyme catalyses a 5'-end (N(7)-methyl 5'-triphosphoguanosine)-(N(6),2'-O-dimethyladenosine) in U6 snRNA + 2-oxoglutarate + O2 = a 5'-end (N(7)-methyl 5'-triphosphoguanosine)-(2'-O-methyladenosine) in U6 snRNA + formaldehyde + succinate + CO2. It carries out the reaction an N(1)-methyladenosine in tRNA + 2-oxoglutarate + O2 = an adenosine in tRNA + formaldehyde + succinate + CO2. Its function is as follows. RNA demethylase that mediates oxidative demethylation of different RNA species, such as mRNAs, tRNAs and snRNAs, and acts as a regulator of fat mass, adipogenesis and energy homeostasis. Specifically demethylates N(6)-methyladenosine (m6A) RNA, the most prevalent internal modification of messenger RNA (mRNA) in higher eukaryotes. M6A demethylation by FTO affects mRNA expression and stability. Also able to demethylate m6A in U6 small nuclear RNA (snRNA). Mediates demethylation of N(6),2'-O-dimethyladenosine cap (m6A(m)), by demethylating the N(6)-methyladenosine at the second transcribed position of mRNAs and U6 snRNA. Demethylation of m6A(m) in the 5'-cap by FTO affects mRNA stability by promoting susceptibility to decapping. Also acts as a tRNA demethylase by removing N(1)-methyladenine from various tRNAs. Has no activity towards 1-methylguanine. Has no detectable activity towards double-stranded DNA. Also able to repair alkylated DNA and RNA by oxidative demethylation: demethylates single-stranded RNA containing 3-methyluracil, single-stranded DNA containing 3-methylthymine and has low demethylase activity towards single-stranded DNA containing 1-methyladenine or 3-methylcytosine. Ability to repair alkylated DNA and RNA is however unsure in vivo. Involved in the regulation of fat mass, adipogenesis and body weight, thereby contributing to the regulation of body size and body fat accumulation. Involved in the regulation of thermogenesis and the control of adipocyte differentiation into brown or white fat cells. Regulates activity of the dopaminergic midbrain circuitry via its ability to demethylate m6A in mRNAs. Plays an oncogenic role in a number of acute myeloid leukemias by enhancing leukemic oncogene-mediated cell transformation: acts by mediating m6A demethylation of target transcripts such as MYC, CEBPA, ASB2 and RARA, leading to promote their expression. The sequence is that of Alpha-ketoglutarate-dependent dioxygenase FTO (FTO) from Canis lupus familiaris (Dog).